The primary structure comprises 156 residues: UPF0178 protein Jann_2168 (156 aa).

Belongs to the UPF0178 family.

The sequence is that of UPF0178 protein Jann_2168 from Jannaschia sp. (strain CCS1).